The following is a 454-amino-acid chain: Probable glycine dehydrogenase (decarboxylating) subunit 1 (454 aa).

Belongs to the GcvP family. N-terminal subunit subfamily. In terms of assembly, the glycine cleavage system is composed of four proteins: P, T, L and H. In this organism, the P 'protein' is a heterodimer of two subunits.

The enzyme catalyses N(6)-[(R)-lipoyl]-L-lysyl-[glycine-cleavage complex H protein] + glycine + H(+) = N(6)-[(R)-S(8)-aminomethyldihydrolipoyl]-L-lysyl-[glycine-cleavage complex H protein] + CO2. Its function is as follows. The glycine cleavage system catalyzes the degradation of glycine. The P protein binds the alpha-amino group of glycine through its pyridoxal phosphate cofactor; CO(2) is released and the remaining methylamine moiety is then transferred to the lipoamide cofactor of the H protein. The sequence is that of Probable glycine dehydrogenase (decarboxylating) subunit 1 from Sorangium cellulosum (strain So ce56) (Polyangium cellulosum (strain So ce56)).